We begin with the raw amino-acid sequence, 321 residues long: MSSSELIAELERERDRRVLSIQSHVVHGYAGNKCSVFPLQLHGFEVDFINSVQFSNHAGNIEYLTLPTRYEHVKGQKLTEKELEELYEGLTLNNINNYTHVLTGYCGNVTFLQKIADVVKDLKKKNGNTTFVCDPVMGDNGRYYTPKELMPVYRDLIIPLADVLTPNAFELGELTGSPIETEEDCLRAVNELHAKGVKTVVVTSGVTGAQTNESLRCYASVKGSHVYRFTFPRLVGQFVGTGDTFTSLLVVWLDELNGDVSEAVKRVLASMQCLIRKTSSYAQLQVDTNSRAMCELRLIQSRKDLLWPPTCDQIQVEKIGQ.

Residues Ser-23 and Tyr-144 each coordinate substrate. Residues 203–204 (TS) and 230–242 (TFPR…VGTG) contribute to the ATP site. Asp-243 lines the substrate pocket.

This sequence belongs to the pyridoxine kinase family. Requires Zn(2+) as cofactor. Mg(2+) serves as cofactor.

It catalyses the reaction pyridoxal + ATP = pyridoxal 5'-phosphate + ADP + H(+). In terms of biological role, required for synthesis of pyridoxal-5-phosphate from vitamin B6. This is Putative pyridoxal kinase from Caenorhabditis elegans.